A 28-amino-acid chain; its full sequence is Mast cell degranulating peptide (28 aa).

Intrachain disulfides connect C2–C18 and C4–C22.

Expressed by the venom gland.

The protein resides in the secreted. In terms of biological role, mast cell degranulating peptide. This chain is Mast cell degranulating peptide, found in Bombus pensylvanicus (American bumblebee).